The chain runs to 388 residues: Methylthioribose-1-phosphate isomerase (388 aa).

D252 (proton donor) is an active-site residue.

It belongs to the eIF-2B alpha/beta/delta subunits family. MtnA subfamily.

Its subcellular location is the cytoplasm. It localises to the nucleus. The enzyme catalyses 5-(methylsulfanyl)-alpha-D-ribose 1-phosphate = 5-(methylsulfanyl)-D-ribulose 1-phosphate. It participates in amino-acid biosynthesis; L-methionine biosynthesis via salvage pathway; L-methionine from S-methyl-5-thio-alpha-D-ribose 1-phosphate: step 1/6. In terms of biological role, catalyzes the interconversion of methylthioribose-1-phosphate (MTR-1-P) into methylthioribulose-1-phosphate (MTRu-1-P). The sequence is that of Methylthioribose-1-phosphate isomerase from Verticillium alfalfae (strain VaMs.102 / ATCC MYA-4576 / FGSC 10136) (Verticillium wilt of alfalfa).